A 669-amino-acid chain; its full sequence is Dymeclin (669 aa).

A lipid anchor (N-myristoyl glycine) is attached at G2.

It belongs to the dymeclin family. As to quaternary structure, interacts with GOLM1 and PPIB. In terms of processing, myristoylated in vitro; myristoylation is not essential for protein targeting to Golgi compartment.

The protein resides in the cytoplasm. Its subcellular location is the golgi apparatus. It localises to the membrane. In terms of biological role, necessary for correct organization of Golgi apparatus. Involved in bone development. In Mus musculus (Mouse), this protein is Dymeclin (Dym).